Reading from the N-terminus, the 460-residue chain is Argininosuccinate lyase (460 aa).

It belongs to the lyase 1 family. Argininosuccinate lyase subfamily.

The protein localises to the cytoplasm. The enzyme catalyses 2-(N(omega)-L-arginino)succinate = fumarate + L-arginine. It functions in the pathway amino-acid biosynthesis; L-arginine biosynthesis; L-arginine from L-ornithine and carbamoyl phosphate: step 3/3. The sequence is that of Argininosuccinate lyase from Nitratidesulfovibrio vulgaris (strain ATCC 29579 / DSM 644 / CCUG 34227 / NCIMB 8303 / VKM B-1760 / Hildenborough) (Desulfovibrio vulgaris).